A 622-amino-acid polypeptide reads, in one-letter code: Dynein axonemal assembly factor 1 (622 aa).

The segment covering 1 to 11 (MHPEVSEQQAD) has biased composition (polar residues). The segment at 1–80 (MHPEVSEQQA…ARNDRDDRGP (80 aa)) is disordered. A compositionally biased stretch (basic and acidic residues) spans 32–42 (VRKEEINETKE). Residues 48-59 (STTSCQSQKQQS) show a composition bias toward low complexity. The span at 62–80 (SRLDCRSGYARNDRDDRGP) shows a compositional bias: basic and acidic residues. LRR repeat units lie at residues 101-123 (ALND…EEYT), 124-145 (GLRC…QAQS), 146-167 (ELRC…EPLQ), 168-189 (KLDA…SCLP), 190-211 (VLNT…QHLR), and 215-236 (RLCV…SVLE). Positions 249–288 (NPVTKHIPNYRRTVTVRLKQLTYLDDRPVFPKDRACAEAW) constitute an LRRCT domain. A compositionally biased stretch (basic and acidic residues) spans 326-336 (EERKKARDKGE). Disordered stretches follow at residues 326–360 (EERK…PLGE) and 399–431 (EEPD…TDGT). Low complexity-rich tracts occupy residues 337–351 (TPLP…TSPE) and 415–428 (VATA…VAAT). A Phosphoserine modification is found at Ser349. Phosphoserine occurs at positions 464 and 487. Disordered regions lie at residues 480–503 (ISSL…EHTP) and 525–622 (RVPL…FGLD). A compositionally biased stretch (polar residues) spans 539-550 (APETQGQVFSTT).

It belongs to the DNAAF1 family.

The protein resides in the cell projection. It localises to the cilium. Its function is as follows. Cilium-specific protein required for the stability of the ciliary architecture. Plays a role in cytoplasmic preassembly of dynein arms. Involved in regulation of microtubule-based cilia and actin-based brush border microvilli. This chain is Dynein axonemal assembly factor 1 (Dnaaf1), found in Peromyscus polionotus (Oldfield mouse).